Reading from the N-terminus, the 350-residue chain is Transmembrane protein 185A (350 aa).

7 consecutive transmembrane segments (helical) span residues 16 to 36, 41 to 61, 81 to 101, 111 to 131, 177 to 197, 211 to 231, and 240 to 260; these read LIYACLLLFSVLLALRLDGII, WAVFAPIWLWKLMVIVGASVG, FKAMLIAVGIHLLLLMFEVLV, FWLLVFMPLFFVSPVSVAACV, ILMSFLCLVVLYYIVWSVLFL, ITMALSWMTIVVPLLTFEILL, and AFSCIPIFVPLWLSLITLMAT. Residues 298 to 350 are mediates interaction with MAP1B; that stretch reads DLHHEDNEETEETPVPEPPKIAPMFRKKARVVITQSPGKYVLPPPKLNIEMPD.

Belongs to the TMEM185 family. In terms of assembly, interacts with MAP1B.

The protein resides in the cell projection. It localises to the dendrite. Its subcellular location is the membrane. The protein is Transmembrane protein 185A (TMEM185A) of Homo sapiens (Human).